Reading from the N-terminus, the 770-residue chain is Glutamate carboxypeptidase 2 homolog (770 aa).

Residues 1 to 19 (MPYVGVGAQKASTNLTGGP) lie on the Cytoplasmic side of the membrane. Residues 20 to 40 (MMKAYAFVLAFFLLGLGVLAL) traverse the membrane as a helical; Signal-anchor for type II membrane protein segment. The Extracellular segment spans residues 41–770 (GKHHSGRRFN…CVVNTLRDVI (730 aa)). N-linked (GlcNAc...) asparagine glycosylation is found at Asn-175 and Asn-337. A catalytic region spans residues 282–597 (SKKELFKGRT…QYWAELAKTF (316 aa)). Residues His-387 and Asp-397 each contribute to the Zn(2+) site. An N-linked (GlcNAc...) asparagine glycan is attached at Asn-417. Glu-435 acts as the Nucleophile in catalysis. The Zn(2+) site is built by Glu-436 and Asp-464. 2 N-linked (GlcNAc...) asparagine glycosylation sites follow: Asn-469 and Asn-551. His-562 is a binding site for Zn(2+). 2 N-linked (GlcNAc...) asparagine glycosylation sites follow: Asn-606 and Asn-630.

This sequence belongs to the peptidase M28 family. M28B subfamily. The cofactor is Zn(2+).

The protein resides in the membrane. It carries out the reaction Release of an unsubstituted, C-terminal glutamyl residue, typically from Ac-Asp-Glu or folylpoly-gamma-glutamates.. The sequence is that of Glutamate carboxypeptidase 2 homolog from Caenorhabditis briggsae.